Here is a 279-residue protein sequence, read N- to C-terminus: Putative pyruvate, phosphate dikinase regulatory protein (279 aa).

An ADP-binding site is contributed by 152-159 (GVSRTSKS).

It belongs to the pyruvate, phosphate/water dikinase regulatory protein family. PDRP subfamily.

It carries out the reaction N(tele)-phospho-L-histidyl/L-threonyl-[pyruvate, phosphate dikinase] + ADP = N(tele)-phospho-L-histidyl/O-phospho-L-threonyl-[pyruvate, phosphate dikinase] + AMP + H(+). The enzyme catalyses N(tele)-phospho-L-histidyl/O-phospho-L-threonyl-[pyruvate, phosphate dikinase] + phosphate + H(+) = N(tele)-phospho-L-histidyl/L-threonyl-[pyruvate, phosphate dikinase] + diphosphate. In terms of biological role, bifunctional serine/threonine kinase and phosphorylase involved in the regulation of the pyruvate, phosphate dikinase (PPDK) by catalyzing its phosphorylation/dephosphorylation. In Anaplasma marginale (strain Florida), this protein is Putative pyruvate, phosphate dikinase regulatory protein.